The chain runs to 1143 residues: ATP-dependent helicase/deoxyribonuclease subunit B (1143 aa).

One can recognise a UvrD-like helicase ATP-binding domain in the interval 1 to 274 (MNYMHLGRAG…YGQTVKFQST (274 aa)). 7–14 (GRAGTGKT) contacts ATP. Residues 267 to 565 (QTVKFQSTGL…RFSLVPPSLD (299 aa)) enclose the UvrD-like helicase C-terminal domain. The [4Fe-4S] cluster site is built by C782, C1104, C1107, and C1113.

This sequence belongs to the helicase family. AddB/RexB type 1 subfamily. As to quaternary structure, heterodimer of AddA and AddB. It depends on Mg(2+) as a cofactor. [4Fe-4S] cluster serves as cofactor.

Its function is as follows. The heterodimer acts as both an ATP-dependent DNA helicase and an ATP-dependent, dual-direction single-stranded exonuclease. Recognizes the chi site generating a DNA molecule suitable for the initiation of homologous recombination. The AddB subunit has 5' -&gt; 3' nuclease activity but not helicase activity. The chain is ATP-dependent helicase/deoxyribonuclease subunit B from Exiguobacterium sibiricum (strain DSM 17290 / CCUG 55495 / CIP 109462 / JCM 13490 / 255-15).